We begin with the raw amino-acid sequence, 210 residues long: Fibroblast growth factor 21 (210 aa).

Residues M1–Q28 form the signal peptide. Positions P144–S210 are disordered.

The protein belongs to the heparin-binding growth factors family. As to quaternary structure, interacts (via C-terminus) with KLB; this interaction is direct. Interacts with FGFR4. Most abundantly expressed in the liver, also expressed in the thymus at lower levels. Expressed in skeletal muscle (at protein level). Secreted in plasma (at protein level).

The protein resides in the secreted. In terms of biological role, stimulates glucose uptake in differentiated adipocytes via the induction of glucose transporter SLC2A1/GLUT1 expression (but not SLC2A4/GLUT4 expression). Activity probably requires the presence of KLB. Regulates systemic glucose homeostasis and insulin sensitivity. The protein is Fibroblast growth factor 21 (Fgf21) of Mus musculus (Mouse).